The primary structure comprises 403 residues: Phosphoglycerate kinase (403 aa).

Residues 22–24 (DLN), Arg37, 60–63 (HLGR), Arg119, and Arg156 each bind substrate. Residues Lys206, Gly302, Glu333, and 359–362 (GGDS) each bind ATP.

This sequence belongs to the phosphoglycerate kinase family. Monomer.

The protein resides in the cytoplasm. The enzyme catalyses (2R)-3-phosphoglycerate + ATP = (2R)-3-phospho-glyceroyl phosphate + ADP. Its pathway is carbohydrate degradation; glycolysis; pyruvate from D-glyceraldehyde 3-phosphate: step 2/5. In Streptomyces griseus subsp. griseus (strain JCM 4626 / CBS 651.72 / NBRC 13350 / KCC S-0626 / ISP 5235), this protein is Phosphoglycerate kinase.